We begin with the raw amino-acid sequence, 584 residues long: Chondroitin proteoglycan 1 (584 aa).

The signal sequence occupies residues 1–17; the sequence is MTLKPVLLAFLVASAYA. O-linked (Xyl...) (chondroitin sulfate) serine glycosylation occurs at serine 50. 3 consecutive Chitin-binding type-2 domains span residues 58–115, 211–268, and 524–578; these read DTDC…QCGG, TKSC…ECTN, and VPAC…ECHQ. Disulfide bonds link cysteine 91-cysteine 104 and cysteine 244-cysteine 257. Residues 267-295 are disordered; that stretch reads TNGSGNDEGSADETTPESSGEMPYSNGYG. A glycan (N-linked (GlcNAc...) asparagine) is linked at asparagine 268. The cysteines at positions 554 and 567 are disulfide-linked.

In terms of tissue distribution, expressed in the germline.

In terms of biological role, required for polar body extrusion during cytokinesis in embryo development. Affects cortical granule size. Has roles in meiotic chromosome segregation, osmotic barrier function and polarization in conjunction with cpg-2. Binds chitin. This chain is Chondroitin proteoglycan 1 (cpg-1), found in Caenorhabditis elegans.